A 528-amino-acid polypeptide reads, in one-letter code: U3 small nucleolar RNA-associated protein 15 homolog (528 aa).

At alanine 2 the chain carries N-acetylalanine. WD repeat units lie at residues 36-75, 78-117, 120-159, 162-202, 204-242, 246-285, and 287-326; these read KEFGAVSKVDFSPQPPYNYAVTASSRIHIYGRYSQEPVKT, RFKDTAYCATFRQDGQLLVAGSEDGVVQLFDISGRAPLRQ, GHTKAVHTVDFTADKYHVVSGADDYTVKLWDIPNSKEILT, EHSD…NVLC, EHGQPVESVLLFPSGGLLVSAGGRYVKVWDMLKGGQLLV, NHHKTVTCLCLSSSGQRLLSGSLDRKVKIYSTTSYKVVHS, and DYAASILSLALSHQDETVVVGMTNGILSVKHRKSEAKKES. Residue lysine 249 forms a Glycyl lysine isopeptide (Lys-Gly) (interchain with G-Cter in SUMO2) linkage. A disordered region spans residues 508-528; the sequence is AELPEEKTESPRQPSDTDKNS. Basic and acidic residues predominate over residues 511-528; that stretch reads PEEKTESPRQPSDTDKNS.

In terms of assembly, part of the small subunit (SSU) processome, composed of more than 70 proteins and the RNA chaperone small nucleolar RNA (snoRNA) U3. May be a component of the proposed t-UTP subcomplex of the ribosomal small subunit (SSU) processome containing at least UTP4, WDR43, HEATR1, UTP15, WDR75. Interacts directly with UTP4 and WDR43.

The protein localises to the nucleus. It is found in the nucleolus. Ribosome biogenesis factor. Involved in nucleolar processing of pre-18S ribosomal RNA. Required for optimal pre-ribosomal RNA transcription by RNA polymerase I. Part of the small subunit (SSU) processome, first precursor of the small eukaryotic ribosomal subunit. During the assembly of the SSU processome in the nucleolus, many ribosome biogenesis factors, an RNA chaperone and ribosomal proteins associate with the nascent pre-rRNA and work in concert to generate RNA folding, modifications, rearrangements and cleavage as well as targeted degradation of pre-ribosomal RNA by the RNA exosome. The chain is U3 small nucleolar RNA-associated protein 15 homolog from Rattus norvegicus (Rat).